The chain runs to 20 residues: Short cationic peptide-4c (20 aa).

Glu20 is modified (glutamic acid 1-amide).

In terms of tissue distribution, expressed by the venom gland.

It is found in the secreted. The protein is Short cationic peptide-4c of Cupiennius salei (American wandering spider).